Reading from the N-terminus, the 27-residue chain is Caerulein precursor fragment R5 (27 aa).

Expressed by the skin glands.

Its subcellular location is the secreted. Functionally, antimicrobial peptide. The protein is Caerulein precursor fragment R5 of Xenopus ruwenzoriensis (Uganda clawed frog).